The chain runs to 220 residues: ATP synthase F(0) complex subunit a (220 aa).

6 helical membrane-spanning segments follow: residues 12-32, 69-89, 91-111, 130-150, 158-178, and 183-203; these read PTLLGVPLIAVAMMFPWTLLP, WAMILMSLNLLGLLPYTFTPT, QLSLNMGLAIPFWLATVLLGL, LLIPILIIIETISLLIRPFAL, LTAGHLLMQLIATAAFVLLPM, and ALLTTLVLFLLTLLEIAVAMI.

The protein belongs to the ATPase A chain family. Component of the ATP synthase complex composed at least of ATP5F1A/subunit alpha, ATP5F1B/subunit beta, ATP5MC1/subunit c (homooctomer), MT-ATP6/subunit a, MT-ATP8/subunit 8, ATP5ME/subunit e, ATP5MF/subunit f, ATP5MG/subunit g, ATP5MK/subunit k, ATP5MJ/subunit j, ATP5F1C/subunit gamma, ATP5F1D/subunit delta, ATP5F1E/subunit epsilon, ATP5PF/subunit F6, ATP5PB/subunit b, ATP5PD/subunit d, ATP5PO/subunit OSCP. ATP synthase complex consists of a soluble F(1) head domain (subunits alpha(3) and beta(3)) - the catalytic core - and a membrane F(0) domain - the membrane proton channel (subunits c, a, 8, e, f, g, k and j). These two domains are linked by a central stalk (subunits gamma, delta, and epsilon) rotating inside the F1 region and a stationary peripheral stalk (subunits F6, b, d, and OSCP). Interacts with DNAJC30; interaction is direct.

The protein resides in the mitochondrion inner membrane. The catalysed reaction is H(+)(in) = H(+)(out). In terms of biological role, subunit a, of the mitochondrial membrane ATP synthase complex (F(1)F(0) ATP synthase or Complex V) that produces ATP from ADP in the presence of a proton gradient across the membrane which is generated by electron transport complexes of the respiratory chain. ATP synthase complex consist of a soluble F(1) head domain - the catalytic core - and a membrane F(1) domain - the membrane proton channel. These two domains are linked by a central stalk rotating inside the F(1) region and a stationary peripheral stalk. During catalysis, ATP synthesis in the catalytic domain of F(1) is coupled via a rotary mechanism of the central stalk subunits to proton translocation. With the subunit c (ATP5MC1), forms the proton-conducting channel in the F(0) domain, that contains two crucial half-channels (inlet and outlet) that facilitate proton movement from the mitochondrial intermembrane space (IMS) into the matrix. Protons are taken up via the inlet half-channel and released through the outlet half-channel, following a Grotthuss mechanism. In Latimeria chalumnae (Coelacanth), this protein is ATP synthase F(0) complex subunit a.